Consider the following 319-residue polypeptide: Triacylglycerol lipase (319 aa).

The AB hydrolase-1 domain occupies 10-288; that stretch reads PVILVHGLAG…TSYHWNHLDE (279 aa). Leucine 17 is a binding site for substrate. Serine 87 functions as the Nucleophile in the catalytic mechanism. Glutamine 88 is a substrate binding site. Cysteine 190 and cysteine 269 are disulfide-bonded. Aspartate 241 contacts Ca(2+). Residues aspartate 263 and histidine 285 each act as charge relay system in the active site. Ca(2+)-binding residues include aspartate 287, glutamine 291, and valine 295.

It belongs to the AB hydrolase superfamily. Pseudomonas lipase family. As to quaternary structure, monomer. Interacts with lipase-specific foldase Lif. The cofactor is Ca(2+).

The protein localises to the secreted. The catalysed reaction is a triacylglycerol + H2O = a diacylglycerol + a fatty acid + H(+). Functionally, catalyzes the hydrolysis of triacylglycerol. The protein is Triacylglycerol lipase of Pseudarthrobacter phenanthrenivorans (Arthrobacter phenanthrenivorans).